A 100-amino-acid polypeptide reads, in one-letter code: Small cysteine and glycine repeat-containing protein 3 (100 aa).

A 13 X 2 AA repeats of CG region spans residues 4–82 (CGCGSCGGCG…RRTCRSCGCG (79 aa)).

The protein belongs to the KRTAP type 28 family.

Functionally, in the hair cortex, hair keratin intermediate filaments are embedded in an interfilamentous matrix, consisting of hair keratin-associated proteins (KRTAP), which are essential for the formation of a rigid and resistant hair shaft through their extensive disulfide bond cross-linking with abundant cysteine residues of hair keratins. The matrix proteins include the high-sulfur and high-glycine-tyrosine keratins. The sequence is that of Small cysteine and glycine repeat-containing protein 3 from Homo sapiens (Human).